Reading from the N-terminus, the 195-residue chain is CD70 antigen (195 aa).

Over 1 to 23 (MPEEGRPCPWVRWSGTAFQRQWP) the chain is Cytoplasmic. A helical; Signal-anchor for type II membrane protein transmembrane segment spans residues 24–44 (WLLLVVFITVFCCWFHCSGLL). The Extracellular portion of the chain corresponds to 45-195 (SKQQQRLLEH…TFFGVQWICP (151 aa)). The region spanning 58–193 (HTAELQLNLT…DETFFGVQWI (136 aa)) is the THD domain. N-linked (GlcNAc...) asparagine glycosylation is found at Asn65 and Asn116. 2 cysteine pairs are disulfide-bonded: Cys117–Cys153 and Cys135–Cys170. N-linked (GlcNAc...) asparagine glycosylation is present at Asn172.

This sequence belongs to the tumor necrosis factor family. Homotrimer. In terms of processing, N-glycosylated. In terms of tissue distribution, very low level of expression. Detected in splenocytes and thymocytes.

Its subcellular location is the cell membrane. Functionally, expressed at the plasma membrane of B cells, it is the ligand of the CD27 receptor which is specifically expressed at the surface of T cells. The CD70-CD27 signaling pathway mediates antigen-specific T cell activation and expansion which in turn provides immune surveillance of B cells. The protein is CD70 antigen of Mus musculus (Mouse).